The primary structure comprises 487 residues: MMHFKSGLELTELQNMTVPEDDNISNDSNDFTEVENGQINSKFISDRESRRSLTNSHLEKKKCDEYIPGTTSLGMSVFNLSNAIMGSGILGLAFALANTGILLFLVLLTSVTLLSIYSINLLLICSKETGCMVYEKLGEQVFGTTGKFVIFGATSLQNTGAMLSYLFIVKNELPSAIKFLMGKEETFSAWYVDGRVLVVIVTFGIILPLCLLKNLGYLGYTSGFSLSCMVFFLIVVIYKKFQIPCIVPELNSTISANSTNADTCTPKYVTFNSKTVYALPTIAFAFVCHPSVLPIYSELKDRSQKKMQMVSNISFFAMFVMYFLTAIFGYLTFYDNVQSDLLHKYQSKDDILILTVRLAVIVAVILTVPVLFFTVRSSLFELAKKTKFNLCRHTVVTCILLVVINLLVIFIPSMKDIFGVVGVTSANMLIFILPSSLYLKITDQDGDKGTQRIWAALFLGLGVLFSLVSIPLVIYDWACSSSSDEGH.

Residues 1 to 74 (MMHFKSGLEL…EYIPGTTSLG (74 aa)) are Cytoplasmic-facing. A Phosphoserine modification is found at serine 6. Position 11 is a phosphothreonine (threonine 11). Residues serine 25, serine 28, serine 49, and serine 52 each carry the phosphoserine modification. Threonine 54 carries the phosphothreonine modification. A Phosphoserine modification is found at serine 56. A helical transmembrane segment spans residues 75–97 (MSVFNLSNAIMGSGILGLAFALA). Residues 98–112 (NTGILLFLVLLTSVT) lie on the Extracellular side of the membrane. Residues 113 to 133 (LLSIYSINLLLICSKETGCMV) traverse the membrane as a helical segment. The Cytoplasmic portion of the chain corresponds to 134-147 (YEKLGEQVFGTTGK). A helical membrane pass occupies residues 148-168 (FVIFGATSLQNTGAMLSYLFI). The Extracellular portion of the chain corresponds to 169-188 (VKNELPSAIKFLMGKEETFS). The chain crosses the membrane as a helical span at residues 189–211 (AWYVDGRVLVVIVTFGIILPLCL). The Cytoplasmic portion of the chain corresponds to 212–216 (LKNLG). The chain crosses the membrane as a helical span at residues 217-237 (YLGYTSGFSLSCMVFFLIVVI). Residues 238 to 275 (YKKFQIPCIVPELNSTISANSTNADTCTPKYVTFNSKT) are Extracellular-facing. A disulfide bond links cysteine 245 and cysteine 264. 2 N-linked (GlcNAc...) asparagine glycosylation sites follow: asparagine 251 and asparagine 257. Residues 276-296 (VYALPTIAFAFVCHPSVLPIY) form a helical membrane-spanning segment. Residues 297 to 312 (SELKDRSQKKMQMVSN) are Cytoplasmic-facing. Residues 313–333 (ISFFAMFVMYFLTAIFGYLTF) form a helical membrane-spanning segment. Residues 334 to 350 (YDNVQSDLLHKYQSKDD) are Extracellular-facing. The chain crosses the membrane as a helical span at residues 351 to 371 (ILILTVRLAVIVAVILTVPVL). Residues 372–393 (FFTVRSSLFELAKKTKFNLCRH) lie on the Cytoplasmic side of the membrane. The helical transmembrane segment at 394-414 (TVVTCILLVVINLLVIFIPSM) threads the bilayer. Residues 415–416 (KD) are Extracellular-facing. A helical membrane pass occupies residues 417-437 (IFGVVGVTSANMLIFILPSSL). Topologically, residues 438–452 (YLKITDQDGDKGTQR) are cytoplasmic. A helical transmembrane segment spans residues 453–473 (IWAALFLGLGVLFSLVSIPLV). At 474–487 (IYDWACSSSSDEGH) the chain is on the extracellular side.

Belongs to the amino acid/polyamine transporter 2 family. In terms of processing, N-glycosylation plays an important role in the L-glutamine transport. As to expression, expressed in the cerebral cortex by pyramidal and GABAergic neurons, astrocytes and other non-neuronal cells (at protein level). Expressed in placenta, heart, lung, skeletal muscle, spleen, stomach and testis. Highly expressed in cytotrophoblast cells from term placenta.

Its subcellular location is the cell membrane. It carries out the reaction L-glutamine(in) + Na(+)(in) = L-glutamine(out) + Na(+)(out). The catalysed reaction is L-alanine(in) + Na(+)(in) = L-alanine(out) + Na(+)(out). It catalyses the reaction L-asparagine(in) + Na(+)(in) = L-asparagine(out) + Na(+)(out). The enzyme catalyses L-histidine(in) + Na(+)(in) = L-histidine(out) + Na(+)(out). It carries out the reaction L-serine(in) + Na(+)(in) = L-serine(out) + Na(+)(out). The catalysed reaction is L-cysteine(in) + Na(+)(in) = L-cysteine(out) + Na(+)(out). It catalyses the reaction L-methionine(in) + Na(+)(in) = L-methionine(out) + Na(+)(out). The enzyme catalyses glycine(in) + Na(+)(in) = glycine(out) + Na(+)(out). It carries out the reaction L-threonine(in) + Na(+)(in) = L-threonine(out) + Na(+)(out). The catalysed reaction is L-proline(in) + Na(+)(in) = L-proline(out) + Na(+)(out). With respect to regulation, inhibited by alpha-(methylamino)isobutyric acid (MeAIB). Inhibited by lithium, potassium, choline ions, N-methylglucamine. The pH dependence has an allosteric effect on the transport. Its function is as follows. Symporter that cotransports short-chain neutral amino acids and sodium ions from the extraccellular to the intracellular side of the cell membrane. The transport is elctrogenic, pH dependent and driven by the Na(+) electrochemical gradient. Participates in the astroglia-derived glutamine transport into GABAergic interneurons for neurotransmitter GABA de novo synthesis. May also contributes to amino acid transport in placental trophoblasts. Also regulates synaptic plasticity. The sequence is that of Sodium-coupled neutral amino acid symporter 1 (SLC38A1) from Homo sapiens (Human).